The chain runs to 384 residues: S-adenosylmethionine synthase (384 aa).

Residue His15 participates in ATP binding. Position 17 (Asp17) interacts with Mg(2+). Glu43 provides a ligand contact to K(+). L-methionine is bound by residues Glu56 and Gln99. The interval 99-109 (QSPDINQGVDR) is flexible loop. ATP is bound by residues 164-166 (DAK), 230-231 (RF), Asp239, 245-246 (RK), Ala262, and Lys266. Position 239 (Asp239) interacts with L-methionine. Lys270 contacts L-methionine.

It belongs to the AdoMet synthase family. Homotetramer; dimer of dimers. It depends on Mg(2+) as a cofactor. K(+) is required as a cofactor.

It is found in the cytoplasm. It carries out the reaction L-methionine + ATP + H2O = S-adenosyl-L-methionine + phosphate + diphosphate. It participates in amino-acid biosynthesis; S-adenosyl-L-methionine biosynthesis; S-adenosyl-L-methionine from L-methionine: step 1/1. Its function is as follows. Catalyzes the formation of S-adenosylmethionine (AdoMet) from methionine and ATP. The overall synthetic reaction is composed of two sequential steps, AdoMet formation and the subsequent tripolyphosphate hydrolysis which occurs prior to release of AdoMet from the enzyme. This chain is S-adenosylmethionine synthase, found in Proteus mirabilis (strain HI4320).